Consider the following 197-residue polypeptide: SERTA domain-containing protein 3 (197 aa).

Residues 1 to 23 (MGGLKRKHSDLEEEEEEEKWDWS) form a disordered region. Residues 27 to 74 (LRSYQQALLRISLDKVQRSLGPRAPSLRRHVLIHNTLQQLQAAIRLAP) enclose the SERTA domain.

In terms of assembly, interacts with RPA2.

Its subcellular location is the nucleus. The protein localises to the nucleolus. Its function is as follows. Antiviral interferon-stimulated protein that plays a role in innate immunity and in the suppression of viruses through different mechanisms. Plays a role in the late phase response of TLR-induced immune effector expression. Strong transcriptional coactivator. In Mus musculus (Mouse), this protein is SERTA domain-containing protein 3 (Sertad3).